Here is a 626-residue protein sequence, read N- to C-terminus: DNA topoisomerase 4 subunit A (626 aa).

Positions 24 to 439 constitute a Topo IIA-type catalytic domain; sequence IASVVDGFKP…RGYSINFIDL (416 aa). The active-site O-(5'-phospho-DNA)-tyrosine intermediate is Tyr-105.

This sequence belongs to the type II topoisomerase GyrA/ParC subunit family. In terms of assembly, heterotetramer composed of ParC and ParE.

It localises to the cell membrane. It carries out the reaction ATP-dependent breakage, passage and rejoining of double-stranded DNA.. Its function is as follows. Topoisomerase IV is essential for chromosome segregation. It relaxes supercoiled DNA. Performs the decatenation events required during the replication of a circular DNA molecule. This Borreliella burgdorferi (strain ATCC 35210 / DSM 4680 / CIP 102532 / B31) (Borrelia burgdorferi) protein is DNA topoisomerase 4 subunit A (parC).